Here is a 268-residue protein sequence, read N- to C-terminus: Membrane lipoprotein TpN32 (268 aa).

Residues 1-23 (MKGKTVSAALVGKLIALSVGVVA) form the signal peptide. A lipid anchor (N-palmitoyl cysteine) is attached at cysteine 24. Cysteine 24 is lipidated: S-diacylglycerol cysteine.

Belongs to the NlpA lipoprotein family.

The protein resides in the cell membrane. The sequence is that of Membrane lipoprotein TpN32 (tpn32) from Treponema pallidum (strain Nichols).